A 312-amino-acid chain; its full sequence is Ribonuclease Z (312 aa).

Zn(2+)-binding residues include His63, His65, Asp67, His68, His141, Asp212, and His270. The active-site Proton acceptor is Asp67.

The protein belongs to the RNase Z family. As to quaternary structure, homodimer. It depends on Zn(2+) as a cofactor.

It carries out the reaction Endonucleolytic cleavage of RNA, removing extra 3' nucleotides from tRNA precursor, generating 3' termini of tRNAs. A 3'-hydroxy group is left at the tRNA terminus and a 5'-phosphoryl group is left at the trailer molecule.. Zinc phosphodiesterase, which displays some tRNA 3'-processing endonuclease activity. Probably involved in tRNA maturation, by removing a 3'-trailer from precursor tRNA. The chain is Ribonuclease Z from Lactobacillus helveticus (strain DPC 4571).